The chain runs to 117 residues: NADH-ubiquinone oxidoreductase chain 3 (117 aa).

Transmembrane regions (helical) follow at residues isoleucine 4–isoleucine 24, isoleucine 60–isoleucine 80, and isoleucine 86–histidine 106.

Belongs to the complex I subunit 3 family.

It localises to the mitochondrion membrane. The enzyme catalyses a ubiquinone + NADH + 5 H(+)(in) = a ubiquinol + NAD(+) + 4 H(+)(out). Functionally, core subunit of the mitochondrial membrane respiratory chain NADH dehydrogenase (Complex I) that is believed to belong to the minimal assembly required for catalysis. Complex I functions in the transfer of electrons from NADH to the respiratory chain. The immediate electron acceptor for the enzyme is believed to be ubiquinone. This Drosophila melanogaster (Fruit fly) protein is NADH-ubiquinone oxidoreductase chain 3 (mt:ND3).